A 66-amino-acid chain; its full sequence is Large ribosomal subunit protein bL35 (66 aa).

It belongs to the bacterial ribosomal protein bL35 family.

This Afipia carboxidovorans (strain ATCC 49405 / DSM 1227 / KCTC 32145 / OM5) (Oligotropha carboxidovorans) protein is Large ribosomal subunit protein bL35.